Here is a 71-residue protein sequence, read N- to C-terminus: UPF0346 protein SP70585_0986 (71 aa).

The protein belongs to the UPF0346 family.

This chain is UPF0346 protein SP70585_0986, found in Streptococcus pneumoniae (strain 70585).